The primary structure comprises 182 residues: Probable RNA 2'-phosphotransferase (182 aa).

The protein belongs to the KptA/TPT1 family.

Functionally, removes the 2'-phosphate from RNA via an intermediate in which the phosphate is ADP-ribosylated by NAD followed by a presumed transesterification to release the RNA and generate ADP-ribose 1''-2''-cyclic phosphate (APPR&gt;P). May function as an ADP-ribosylase. This is Probable RNA 2'-phosphotransferase from Herpetosiphon aurantiacus (strain ATCC 23779 / DSM 785 / 114-95).